An 809-amino-acid chain; its full sequence is Chorion peroxidase (809 aa).

Residues 1 to 21 form the signal peptide; sequence MSRILFILLLLIVTQLSELQA. Residues 22–223 constitute a propeptide that is removed on maturation; that stretch reads AAFSVRQNRF…KFTETPLAHH (202 aa). Residues 36–55 are disordered; that stretch reads DLQTPAPLATSTESSKKPEK. Asn-110 carries N-linked (GlcNAc...) asparagine glycosylation. Position 224 is an N-acetylcysteine; in Chorion peroxidase light chain (Cys-224). Cysteines 230 and 244 form a disulfide. His-320 (proton acceptor) is an active-site residue. An intrachain disulfide couples Cys-448 to Cys-457. His-568 contacts heme b. A disulfide bridge links Cys-765 with Cys-794.

This sequence belongs to the peroxidase family. XPO subfamily. In terms of assembly, heterodimer. Requires heme b as cofactor. Expressed at low levels in the germarium and early follicles. Expression becomes progressively stronger during vitellogenesis, and is highly expressed in germ cells and somatic cells. A subset of follicle cells, termed border cells (BC), exhibit a high level of expression.

It is found in the secreted. The enzyme catalyses 2 a phenolic donor + H2O2 = 2 a phenolic radical donor + 2 H2O. In terms of biological role, required for ovarian follicle maturation. Involved in the formation of a rigid and insoluble egg chorion by catalyzing chorion protein cross-linking through dityrosine formation and phenol oxidase-catalyzed chorion melanization. The chain is Chorion peroxidase (Pxt) from Drosophila melanogaster (Fruit fly).